Reading from the N-terminus, the 432-residue chain is Lipoyl synthase, mitochondrial (432 aa).

A compositionally biased stretch (low complexity) spans 32-68; the sequence is TLGATPGSTSTSTSTSTATTTTLESTSTSTSGDATET. The segment at 32–71 is disordered; the sequence is TLGATPGSTSTSTSTSTATTTTLESTSTSTSGDATETTIK. Cys150, Cys155, Cys161, Cys180, Cys184, Cys187, and Ser395 together coordinate [4Fe-4S] cluster. In terms of domain architecture, Radical SAM core spans 165–384; sequence KKSEATATIM…RDVALEMGFL (220 aa).

Belongs to the radical SAM superfamily. Lipoyl synthase family. [4Fe-4S] cluster serves as cofactor.

Its subcellular location is the mitochondrion. It catalyses the reaction [[Fe-S] cluster scaffold protein carrying a second [4Fe-4S](2+) cluster] + N(6)-octanoyl-L-lysyl-[protein] + 2 oxidized [2Fe-2S]-[ferredoxin] + 2 S-adenosyl-L-methionine + 4 H(+) = [[Fe-S] cluster scaffold protein] + N(6)-[(R)-dihydrolipoyl]-L-lysyl-[protein] + 4 Fe(3+) + 2 hydrogen sulfide + 2 5'-deoxyadenosine + 2 L-methionine + 2 reduced [2Fe-2S]-[ferredoxin]. It participates in protein modification; protein lipoylation via endogenous pathway; protein N(6)-(lipoyl)lysine from octanoyl-[acyl-carrier-protein]: step 2/2. Catalyzes the radical-mediated insertion of two sulfur atoms into the C-6 and C-8 positions of the octanoyl moiety bound to the lipoyl domains of lipoate-dependent enzymes, thereby converting the octanoylated domains into lipoylated derivatives. The chain is Lipoyl synthase, mitochondrial from Lodderomyces elongisporus (strain ATCC 11503 / CBS 2605 / JCM 1781 / NBRC 1676 / NRRL YB-4239) (Yeast).